We begin with the raw amino-acid sequence, 403 residues long: RILP-like protein 1 (403 aa).

S7 is subject to Phosphoserine. The RH1 domain occupies 10-97 (AAESALEKNV…RLERMDRIEK (88 aa)). C47 is modified (S-nitrosocysteine). Residues 76-258 (ELDELRLELD…KLRERLQGEH (183 aa)) adopt a coiled-coil conformation. Disordered stretches follow at residues 254-275 (LQGE…GEES), 327-352 (EMEE…PESG), and 384-403 (ANTH…LQHL). S259 carries the phosphoserine modification. Residues 262 to 275 (GEEEPETEPVGEES) show a composition bias toward acidic residues. An RH2 domain is found at 291–356 (RPRFTLQELR…PQPESGIKRL (66 aa)). Residues 394–403 (EQGQEALQHL) show a composition bias toward polar residues.

Belongs to the RILPL family. Interacts (when S-nitrosylated) with GAPDH. Interacts with RAB8A; interaction is dependent on the phosphorylation of 'Thr-72' of RAB8A. Interacts with RAB10 and RAB12; the interaction is dependent on the phosphorylation of 'Thr-73' of RAB10, and 'Ser-105' of RAB12. S-nitrosylation is required for the interaction with GAPDH. As to expression, widely expressed. Expressed at lower level in liver and kidney.

It is found in the cytoplasm. The protein localises to the cytosol. The protein resides in the cytoskeleton. Its subcellular location is the microtubule organizing center. It localises to the centrosome. It is found in the centriole. The protein localises to the cilium basal body. Functionally, plays a role in the regulation of cell shape and polarity. Plays a role in cellular protein transport, including protein transport away from primary cilia. Neuroprotective protein, which acts by sequestring GAPDH in the cytosol and prevent the apoptotic function of GAPDH in the nucleus. Competes with SIAH1 for binding GAPDH. Does not regulate lysosomal morphology and distribution. Binds to RAB10 following LRRK2-mediated RAB10 phosphorylation which leads to inhibition of ciliogenesis. This is RILP-like protein 1 (RILPL1) from Homo sapiens (Human).